A 312-amino-acid polypeptide reads, in one-letter code: MKWSEISIHTTEEAVEAVSHILHEAGASGVAIEDPAELTKEREQQYGEIYALNPDEYPAEGVLIKAYFPQTDSLHETIAGVKSSIDVLPSYDIEIGTGNITVNEVNEEDWATAWKKYYHPVQISDTFTIVPTWEEYTPSSPDEKIIELDPGMAFGTGTHPTTTMCIRALEKTVQPGDNIIDVGTGSGVLSIAAAKLGASSVQAYDLDPVAVESAEMNVRLNKTDDIVSVGQNSLLEGIEGPVDLIVANLLAEIILLFPEDAARVVKSGGLFITSGIIAAKEKVISEALEKAGFTIEEVLRMEDWVAIIARNA.

Residues threonine 162, glycine 183, aspartate 205, and asparagine 248 each coordinate S-adenosyl-L-methionine.

The protein belongs to the methyltransferase superfamily. PrmA family.

The protein localises to the cytoplasm. The catalysed reaction is L-lysyl-[protein] + 3 S-adenosyl-L-methionine = N(6),N(6),N(6)-trimethyl-L-lysyl-[protein] + 3 S-adenosyl-L-homocysteine + 3 H(+). Functionally, methylates ribosomal protein L11. This chain is Ribosomal protein L11 methyltransferase, found in Bacillus cereus (strain B4264).